A 1375-amino-acid polypeptide reads, in one-letter code: DNA-directed RNA polymerase subunit beta (1375 aa).

It belongs to the RNA polymerase beta chain family. As to quaternary structure, the RNAP catalytic core consists of 2 alpha, 1 beta, 1 beta' and 1 omega subunit. When a sigma factor is associated with the core the holoenzyme is formed, which can initiate transcription.

It carries out the reaction RNA(n) + a ribonucleoside 5'-triphosphate = RNA(n+1) + diphosphate. Functionally, DNA-dependent RNA polymerase catalyzes the transcription of DNA into RNA using the four ribonucleoside triphosphates as substrates. The polypeptide is DNA-directed RNA polymerase subunit beta (Coxiella burnetii (strain RSA 331 / Henzerling II)).